The following is a 226-amino-acid chain: PtdIns3K complex I subunit atg38 (226 aa).

The residue at position 2 (Ser2) is an N-acetylserine. Coiled coils occupy residues 52–85 (DVTQ…ENNI) and 182–209 (FKEY…LRER).

Belongs to the ATG38 family. Homodimer. Component of the autophagy-specific VPS34 PI3-kinase complex I composed of VPS15, VPS30, VPS34, ATG14 and an ATG38 homodimer. Interacts directly with ATG14 and VPS34.

It is found in the cytoplasm. The protein resides in the preautophagosomal structure membrane. In terms of biological role, autophagy-related protein required for cytoplasm to vacuole transport (Cvt) and autophagy as a part of the autophagy-specific VPS34 PI3-kinase complex I. This complex is essential to recruit the ATG8-phosphatidylinositol conjugate and the ATG12-ATG5 conjugate to the pre-autophagosomal structure. ATG38 is required for the integrity of the active PI3-kinase complex I by maintaining an association between VPS15-VPS34 and ATG14-VPS30 subcomplexes. The chain is PtdIns3K complex I subunit atg38 from Saccharomyces cerevisiae (strain ATCC 204508 / S288c) (Baker's yeast).